A 377-amino-acid polypeptide reads, in one-letter code: Carbonic anhydrase 1 (377 aa).

The first 20 residues, 1-20, serve as a signal peptide directing secretion; it reads MARTGALLLVALALAGCAQA. One can recognise an Alpha-carbonic anhydrase domain in the interval 38-318; it reads DHWDHGLNGE…HHHRRLLHNH (281 aa). Intrachain disulfides connect cysteine 61–cysteine 264, cysteine 194–cysteine 198, and cysteine 296–cysteine 351. Asparagine 101 is a glycosylation site (N-linked (GlcNAc...) asparagine). Residue histidine 112 is the Proton acceptor of the active site. The N-linked (GlcNAc...) asparagine glycan is linked to asparagine 135. Positions 163, 165, and 182 each coordinate Zn(2+). Residues threonine 260 and 260 to 261 contribute to the substrate site; that span reads TT. Asparagine 297 carries N-linked (GlcNAc...) asparagine glycosylation.

This sequence belongs to the alpha-carbonic anhydrase family. Tetramer of two large and two small subunits linked by two disulfide bonds. Zn(2+) is required as a cofactor.

It localises to the periplasm. It catalyses the reaction hydrogencarbonate + H(+) = CO2 + H2O. Reversible hydration of carbon dioxide. The protein is Carbonic anhydrase 1 (CAH1) of Chlamydomonas reinhardtii (Chlamydomonas smithii).